Here is a 221-residue protein sequence, read N- to C-terminus: Large ribosomal subunit protein uL4 (221 aa).

The interval 56 to 83 (HATKTRGMVSGGGRKPWKQKGTGRARQG) is disordered.

It belongs to the universal ribosomal protein uL4 family. Part of the 50S ribosomal subunit.

Functionally, one of the primary rRNA binding proteins, this protein initially binds near the 5'-end of the 23S rRNA. It is important during the early stages of 50S assembly. It makes multiple contacts with different domains of the 23S rRNA in the assembled 50S subunit and ribosome. Forms part of the polypeptide exit tunnel. The chain is Large ribosomal subunit protein uL4 from Bifidobacterium adolescentis (strain ATCC 15703 / DSM 20083 / NCTC 11814 / E194a).